Reading from the N-terminus, the 349-residue chain is Alanine racemase (349 aa).

The active-site Proton acceptor; specific for D-alanine is the Lys35. Lys35 bears the N6-(pyridoxal phosphate)lysine mark. Arg130 contacts substrate. The active-site Proton acceptor; specific for L-alanine is the Tyr244. Met292 contacts substrate.

Belongs to the alanine racemase family. It depends on pyridoxal 5'-phosphate as a cofactor.

It catalyses the reaction L-alanine = D-alanine. It participates in amino-acid biosynthesis; D-alanine biosynthesis; D-alanine from L-alanine: step 1/1. Its function is as follows. Catalyzes the interconversion of L-alanine and D-alanine. May also act on other amino acids. This is Alanine racemase (alr) from Cereibacter sphaeroides (strain ATCC 17025 / ATH 2.4.3) (Rhodobacter sphaeroides).